The primary structure comprises 227 residues: Cytochrome c oxidase subunit 2 (227 aa).

At 1–14 the chain is on the mitochondrial intermembrane side; that stretch reads MAHPMQLGFQDAAS. Residues 15–45 form a helical membrane-spanning segment; sequence PIMEELLYFHDHTLMIVFMISSLVLYIISLM. Over 46 to 59 the chain is Mitochondrial matrix; sequence LSTELTHTSTMDAQ. The helical transmembrane segment at 60–87 threads the bilayer; that stretch reads EVETVWTILPAVILILIALPSLRILYMM. At 88 to 227 the chain is on the mitochondrial intermembrane side; the sequence is DEINTPSMTL…YFEEWLLKSL (140 aa). Residues histidine 161, cysteine 196, glutamate 198, cysteine 200, histidine 204, and methionine 207 each coordinate Cu cation. Glutamate 198 lines the Mg(2+) pocket. Phosphotyrosine is present on tyrosine 218.

This sequence belongs to the cytochrome c oxidase subunit 2 family. In terms of assembly, component of the cytochrome c oxidase (complex IV, CIV), a multisubunit enzyme composed of 14 subunits. The complex is composed of a catalytic core of 3 subunits MT-CO1, MT-CO2 and MT-CO3, encoded in the mitochondrial DNA, and 11 supernumerary subunits COX4I, COX5A, COX5B, COX6A, COX6B, COX6C, COX7A, COX7B, COX7C, COX8 and NDUFA4, which are encoded in the nuclear genome. The complex exists as a monomer or a dimer and forms supercomplexes (SCs) in the inner mitochondrial membrane with NADH-ubiquinone oxidoreductase (complex I, CI) and ubiquinol-cytochrome c oxidoreductase (cytochrome b-c1 complex, complex III, CIII), resulting in different assemblies (supercomplex SCI(1)III(2)IV(1) and megacomplex MCI(2)III(2)IV(2)). Found in a complex with TMEM177, COA6, COX18, COX20, SCO1 and SCO2. Interacts with TMEM177 in a COX20-dependent manner. Interacts with COX20. Interacts with COX16. Cu cation is required as a cofactor.

The protein localises to the mitochondrion inner membrane. The catalysed reaction is 4 Fe(II)-[cytochrome c] + O2 + 8 H(+)(in) = 4 Fe(III)-[cytochrome c] + 2 H2O + 4 H(+)(out). Component of the cytochrome c oxidase, the last enzyme in the mitochondrial electron transport chain which drives oxidative phosphorylation. The respiratory chain contains 3 multisubunit complexes succinate dehydrogenase (complex II, CII), ubiquinol-cytochrome c oxidoreductase (cytochrome b-c1 complex, complex III, CIII) and cytochrome c oxidase (complex IV, CIV), that cooperate to transfer electrons derived from NADH and succinate to molecular oxygen, creating an electrochemical gradient over the inner membrane that drives transmembrane transport and the ATP synthase. Cytochrome c oxidase is the component of the respiratory chain that catalyzes the reduction of oxygen to water. Electrons originating from reduced cytochrome c in the intermembrane space (IMS) are transferred via the dinuclear copper A center (CU(A)) of subunit 2 and heme A of subunit 1 to the active site in subunit 1, a binuclear center (BNC) formed by heme A3 and copper B (CU(B)). The BNC reduces molecular oxygen to 2 water molecules using 4 electrons from cytochrome c in the IMS and 4 protons from the mitochondrial matrix. In Nycticebus coucang (Slow loris), this protein is Cytochrome c oxidase subunit 2 (MT-CO2).